The chain runs to 173 residues: uncharacterized protein (173 aa).

Residues 49 to 72 (PTRSGRTSNSGNRGPVMTSTSSIN) are disordered.

This is an uncharacterized protein from Human adenovirus B serotype 7 (HAdV-7).